The primary structure comprises 367 residues: Serine/threonine-protein kinase-transforming protein Rmil (367 aa).

The disordered stretch occupies residues 1–64 (EGGSTAGLSA…DSSDDWEIPD (64 aa)). A compositionally biased stretch (basic and acidic residues) spans 33–57 (QRERKSSSSSEDRNRMKTLGRRDSS). The 261-residue stretch at 67-327 (ITVGQRIGSG…PQILASIELL (261 aa)) folds into the Protein kinase domain. Residues 73–81 (IGSGSFGTV) and lysine 93 contribute to the ATP site. Aspartate 186 serves as the catalytic Proton acceptor.

It belongs to the protein kinase superfamily. TKL Ser/Thr protein kinase family. RAF subfamily.

It catalyses the reaction L-seryl-[protein] + ATP = O-phospho-L-seryl-[protein] + ADP + H(+). It carries out the reaction L-threonyl-[protein] + ATP = O-phospho-L-threonyl-[protein] + ADP + H(+). The chain is Serine/threonine-protein kinase-transforming protein Rmil (V-RMIL) from Avian retrovirus IC10.